Reading from the N-terminus, the 101-residue chain is Small ribosomal subunit protein uS14 (101 aa).

The protein belongs to the universal ribosomal protein uS14 family. In terms of assembly, part of the 30S ribosomal subunit. Contacts proteins S3 and S10.

Functionally, binds 16S rRNA, required for the assembly of 30S particles and may also be responsible for determining the conformation of the 16S rRNA at the A site. This chain is Small ribosomal subunit protein uS14, found in Shewanella halifaxensis (strain HAW-EB4).